The following is a 357-amino-acid chain: UPF0283 membrane protein BOV_0999 (357 aa).

The segment at 1–36 is disordered; it reads MSDKTPRKPTAFRLEQPARVSAASEQEEPRRPRAVK. Positions 27 to 36 are enriched in basic and acidic residues; sequence EEPRRPRAVK. 2 consecutive transmembrane segments (helical) span residues 78-98 and 109-129; these read ILFG…TEDL and LGWT…AIIL.

It belongs to the UPF0283 family.

The protein localises to the cell inner membrane. In Brucella ovis (strain ATCC 25840 / 63/290 / NCTC 10512), this protein is UPF0283 membrane protein BOV_0999.